The sequence spans 390 residues: Alanine racemase (390 aa).

Lys37 serves as the catalytic Proton acceptor; specific for D-alanine. Lys37 bears the N6-(pyridoxal phosphate)lysine mark. Arg135 provides a ligand contact to substrate. Tyr274 (proton acceptor; specific for L-alanine) is an active-site residue. Met322 contributes to the substrate binding site.

This sequence belongs to the alanine racemase family. It depends on pyridoxal 5'-phosphate as a cofactor.

It catalyses the reaction L-alanine = D-alanine. Its pathway is amino-acid biosynthesis; D-alanine biosynthesis; D-alanine from L-alanine: step 1/1. Its function is as follows. Catalyzes the interconversion of L-alanine and D-alanine. May also act on other amino acids. The sequence is that of Alanine racemase (alr) from Desulfosudis oleivorans (strain DSM 6200 / JCM 39069 / Hxd3) (Desulfococcus oleovorans).